Reading from the N-terminus, the 441-residue chain is Probable pyridine nucleotide-disulfide oxidoreductase RclA (441 aa).

Residue 33-43 (EQSNAMYGGTC) participates in FAD binding. Cysteines 43 and 48 form a disulfide. Histidine 426 (proton acceptor) is an active-site residue.

It belongs to the class-I pyridine nucleotide-disulfide oxidoreductase family. The cofactor is FAD.

Functionally, probably involved in reactive chlorine species (RCS) stress resistance. The polypeptide is Probable pyridine nucleotide-disulfide oxidoreductase RclA (rclA) (Escherichia coli (strain K12)).